Here is a 256-residue protein sequence, read N- to C-terminus: L-tyrosine degradation gene cluster protein hmgX (256 aa).

The protein belongs to the TTC36 family.

The protein localises to the cytoplasm. Functionally, part of the L-tyrosine degradation gene cluster that mediates the biosynthesis of the brownish pigment pyomelanin as an alternative melanin. The 4-hydroxyphenylpyruvate dioxygenase hppD catalyzes the conversion of 4-hydroxyphenylpyruvate to homogentisic acid (HGA). The protein hmgX is crucial for this conversion and thus, probably functions as an accessory factor to mediate specific activity of hppD. The homogentisate 1,2-dioxygenase hmgA is then involved in the cleavage of the aromatic ring of HGA and its conversion to 4-maleylacetoacetate. When hmgA activity is lowered by the cell wall integrity (CWI) signaling pathway, HGA accumulates and leads to the production of pyomelanin through benzoquinone acetic acid after oxidation and polymerization. On the opposite, in non-stress conditions, both hppD and hmgA activities are balanced and HGA is degraded into 4-maleylacetoacetate. 4-maleylacetoacetate is further converted to 4-fumarylacetoacetate by the maleylacetoacetate isomerase maiA, which is degraded into fumarate and acetoacetate by the fumarylacetoacetase fahA. The polypeptide is L-tyrosine degradation gene cluster protein hmgX (Aspergillus fumigatus (strain ATCC MYA-4609 / CBS 101355 / FGSC A1100 / Af293) (Neosartorya fumigata)).